We begin with the raw amino-acid sequence, 286 residues long: Ribosomal RNA small subunit methyltransferase H (286 aa).

Residues 30–32, D49, F88, D97, and Q104 contribute to the S-adenosyl-L-methionine site; that span reads GGH. The segment at 260 to 286 is disordered; it reads HPLQPSDEESFNNPASRSAKLRALEMR.

This sequence belongs to the methyltransferase superfamily. RsmH family.

It localises to the cytoplasm. The enzyme catalyses cytidine(1402) in 16S rRNA + S-adenosyl-L-methionine = N(4)-methylcytidine(1402) in 16S rRNA + S-adenosyl-L-homocysteine + H(+). Functionally, specifically methylates the N4 position of cytidine in position 1402 (C1402) of 16S rRNA. The protein is Ribosomal RNA small subunit methyltransferase H of Solibacter usitatus (strain Ellin6076).